The following is a 330-amino-acid chain: Aspartate--ammonia ligase (330 aa).

The protein belongs to the class-II aminoacyl-tRNA synthetase family. AsnA subfamily.

The protein localises to the cytoplasm. The enzyme catalyses L-aspartate + NH4(+) + ATP = L-asparagine + AMP + diphosphate + H(+). It participates in amino-acid biosynthesis; L-asparagine biosynthesis; L-asparagine from L-aspartate (ammonia route): step 1/1. The chain is Aspartate--ammonia ligase from Serratia proteamaculans (strain 568).